Here is a 991-residue protein sequence, read N- to C-terminus: Adhesion G-protein coupled receptor F3 (991 aa).

The signal sequence occupies residues 1–20; the sequence is MSSLALSQLLLAVTLPLLEL. The Extracellular segment spans residues 21-694; that stretch reads EPTFVPTAQS…ENPTLDLLSQ (674 aa). N-linked (GlcNAc...) asparagine glycosylation is found at asparagine 75, asparagine 102, asparagine 118, asparagine 321, asparagine 362, asparagine 484, asparagine 571, asparagine 589, asparagine 630, and asparagine 660. In terms of domain architecture, GAIN-B spans 519–684; that stretch reads HPFSFSSANV…SILMSQHTVP (166 aa). 2 disulfides stabilise this stretch: cysteine 635-cysteine 666 and cysteine 654-cysteine 668. The GPS stretch occupies residues 635-684; sequence CVFWDHRVFQGQGGWSDEGCEVHAANASITQCICQHLTAFSILMSQHTVP. The helical transmembrane segment at 695–715 threads the bilayer; it reads VGTGASVLALLVCLAIYGLVW. The Cytoplasmic segment spans residues 716–730; the sequence is RVVVRNKVAFFRHTT. Residues 731 to 751 traverse the membrane as a helical segment; sequence LFNMVICLLVADTCFLGSPFL. At 752-757 the chain is on the extracellular side; that stretch reads PSGYHS. A helical membrane pass occupies residues 758–778; it reads LICLVTAFLCHFFYLATFFWM. At 779–799 the chain is on the cytoplasmic side; sequence LAQALVLAHQLLFVFHQLSKH. Residues 800 to 820 form a helical membrane-spanning segment; sequence VVLSLMVMLGYLCPLGFAGVT. Topologically, residues 821–850 are extracellular; it reads LGLYLPQRKYLWEGKCFLNGGGVMLYSFSE. A helical transmembrane segment spans residues 851 to 871; it reads PVLAIVGVNGLVLVIAVLKLL. Over 872-892 the chain is Cytoplasmic; it reads RPSLSEGPTVEKRQALVGVLK. A helical transmembrane segment spans residues 893–913; it reads ALLILTPIFGLTWGLGVATLF. The Extracellular portion of the chain corresponds to 914–916; sequence DGS. The chain crosses the membrane as a helical span at residues 917–937; sequence IVSHYAFSILNSLQGVFILVF. Over 938 to 991 the chain is Cytoplasmic; it reads GCLTDKKVLEALRKRLRGSRSSNSAISMVTNETYTSEHSKERSEPASYEERMTD. The segment at 964–991 is disordered; sequence SMVTNETYTSEHSKERSEPASYEERMTD. Over residues 972-991 the composition is skewed to basic and acidic residues; that stretch reads TSEHSKERSEPASYEERMTD.

This sequence belongs to the G-protein coupled receptor 2 family. Adhesion G-protein coupled receptor (ADGR) subfamily. Heterodimer of 2 chains generated by proteolytic processing; the large extracellular N-terminal fragment and the membrane-bound C-terminal fragment predominantly remain associated and non-covalently linked. Autoproteolytically processed at the GPS region of the GAIN-B domain; this cleavage modulates receptor activity. In terms of tissue distribution, expression is restricted to testis and circumvallate papillae.

The protein resides in the membrane. Functionally, orphan receptor. In Mus musculus (Mouse), this protein is Adhesion G-protein coupled receptor F3 (ADGRF3).